Consider the following 347-residue polypeptide: Heme A synthase (347 aa).

The next 8 membrane-spanning stretches (helical) occupy residues 17 to 37 (LANW…VGGI), 106 to 126 (GIGA…AIPA), 132 to 152 (MIGI…MVYS), 165 to 185 (LATH…TVLD), 202 to 222 (ALAI…AFVA), 260 to 280 (IVVQ…ALAV), 295 to 315 (AVAT…LTGV), and 317 to 337 (IAVA…LLWA). Histidine 266 serves as a coordination point for heme. Histidine 323 provides a ligand contact to heme.

The protein belongs to the COX15/CtaA family. Type 2 subfamily. As to quaternary structure, interacts with CtaB. The cofactor is heme b.

Its subcellular location is the cell membrane. It catalyses the reaction Fe(II)-heme o + 2 A + H2O = Fe(II)-heme a + 2 AH2. Its pathway is porphyrin-containing compound metabolism; heme A biosynthesis; heme A from heme O: step 1/1. In terms of biological role, catalyzes the conversion of heme O to heme A by two successive hydroxylations of the methyl group at C8. The first hydroxylation forms heme I, the second hydroxylation results in an unstable dihydroxymethyl group, which spontaneously dehydrates, resulting in the formyl group of heme A. The protein is Heme A synthase of Rhizorhabdus wittichii (strain DSM 6014 / CCUG 31198 / JCM 15750 / NBRC 105917 / EY 4224 / RW1) (Sphingomonas wittichii).